The primary structure comprises 61 residues: UPF0434 protein Pput_3813 (61 aa).

Belongs to the UPF0434 family.

This is UPF0434 protein Pput_3813 from Pseudomonas putida (strain ATCC 700007 / DSM 6899 / JCM 31910 / BCRC 17059 / LMG 24140 / F1).